The chain runs to 268 residues: Nickel import ATP-binding protein NikE (268 aa).

The ABC transporter domain occupies 4–252; it reads LNVSDLSHHY…SSDAGRVLQN (249 aa). An ATP-binding site is contributed by 45–52; it reads GRSGCGKS.

The protein belongs to the ABC transporter superfamily. Nickel importer (TC 3.A.1.5.3) family. In terms of assembly, the complex is composed of two ATP-binding proteins (NikD and NikE), two transmembrane proteins (NikB and NikC) and a solute-binding protein (NikA).

It is found in the cell inner membrane. The enzyme catalyses Ni(2+)(out) + ATP + H2O = Ni(2+)(in) + ADP + phosphate + H(+). Functionally, part of the ABC transporter complex NikABCDE involved in nickel import. Responsible for energy coupling to the transport system. This Escherichia coli O157:H7 protein is Nickel import ATP-binding protein NikE.